Here is a 449-residue protein sequence, read N- to C-terminus: Tubulin alpha-B chain (449 aa).

Residues Gln11, Glu71, Ser140, Gly144, Thr145, Thr179, Asn206, and Asn228 each coordinate GTP. Glu71 is a binding site for Mg(2+). Glu254 is a catalytic residue.

This sequence belongs to the tubulin family. In terms of assembly, dimer of alpha and beta chains. A typical microtubule is a hollow water-filled tube with an outer diameter of 25 nm and an inner diameter of 15 nM. Alpha-beta heterodimers associate head-to-tail to form protofilaments running lengthwise along the microtubule wall with the beta-tubulin subunit facing the microtubule plus end conferring a structural polarity. Microtubules usually have 13 protofilaments but different protofilament numbers can be found in some organisms and specialized cells. Mg(2+) serves as cofactor.

The protein localises to the cytoplasm. It is found in the cytoskeleton. The catalysed reaction is GTP + H2O = GDP + phosphate + H(+). Functionally, tubulin is the major constituent of microtubules, a cylinder consisting of laterally associated linear protofilaments composed of alpha- and beta-tubulin heterodimers. Microtubules grow by the addition of GTP-tubulin dimers to the microtubule end, where a stabilizing cap forms. Below the cap, tubulin dimers are in GDP-bound state, owing to GTPase activity of alpha-tubulin. The sequence is that of Tubulin alpha-B chain (tba-2) from Neurospora crassa (strain ATCC 24698 / 74-OR23-1A / CBS 708.71 / DSM 1257 / FGSC 987).